The chain runs to 21 residues: GVLDIFKDAAKQILAHAAEQI.

Isoleucine 21 carries the post-translational modification Isoleucine amide.

Expressed by the skin dorsal glands.

It is found in the secreted. Its function is as follows. Has hemolytic activity against human erythrocytes and antibacterial activity against the Gram-negative bacterium E.coli. The polypeptide is Ocellatin-2 (Leptodactylus ocellatus (Argus frog)).